A 278-amino-acid chain; its full sequence is Tetraspanin-13 (278 aa).

Topologically, residues 1–25 are cytoplasmic; that stretch reads MARDKEDQNNENPSIVQNMSFPFNT. The chain crosses the membrane as a helical span at residues 26–46; sequence IFLISSAIFLVTAAFWFVAVM. The Extracellular segment spans residues 47–62; it reads TLHYRTDECNRFVTTP. A helical membrane pass occupies residues 63–83; that stretch reads GIFISFSLLAMSLTGFYAAYF. At 84–92 the chain is on the cytoplasmic side; it reads KSDCLFRIH. A helical transmembrane segment spans residues 93-113; the sequence is FFIFFLWMFVVVSKAIFVIFL. The Extracellular segment spans residues 114-249; it reads HKETNPRLFP…DVHNTSFSIT (136 aa). N-linked (GlcNAc...) asparagine glycans are attached at residues Asn202, Asn220, and Asn243. A helical transmembrane segment spans residues 250-270; the sequence is VNIIHIIFSLCIGMTGWFAWL. The Cytoplasmic portion of the chain corresponds to 271-278; the sequence is RILRESQK.

This sequence belongs to the tetraspanin (TM4SF) family.

It localises to the membrane. Functionally, may be involved in the regulation of cell differentiation. The polypeptide is Tetraspanin-13 (TET13) (Arabidopsis thaliana (Mouse-ear cress)).